The chain runs to 298 residues: Probable endonuclease 4 (298 aa).

9 residues coordinate Zn(2+): histidine 69, histidine 111, glutamate 146, aspartate 180, histidine 183, histidine 215, aspartate 228, histidine 230, and glutamate 260.

It belongs to the AP endonuclease 2 family. It depends on Zn(2+) as a cofactor.

The enzyme catalyses Endonucleolytic cleavage to 5'-phosphooligonucleotide end-products.. Endonuclease IV plays a role in DNA repair. It cleaves phosphodiester bonds at apurinic or apyrimidinic (AP) sites, generating a 3'-hydroxyl group and a 5'-terminal sugar phosphate. The sequence is that of Probable endonuclease 4 from Bacillus cereus (strain AH187).